The following is a 338-amino-acid chain: Glycerol-3-phosphate dehydrogenase [NAD(P)+] (338 aa).

NADPH is bound by residues serine 12, tryptophan 13, and lysine 110. Positions 110, 141, and 143 each coordinate sn-glycerol 3-phosphate. Alanine 145 is an NADPH binding site. Residues lysine 196, aspartate 249, serine 259, arginine 260, and asparagine 261 each coordinate sn-glycerol 3-phosphate. The active-site Proton acceptor is lysine 196. Residue arginine 260 coordinates NADPH. NADPH is bound by residues valine 284 and glutamate 286.

Belongs to the NAD-dependent glycerol-3-phosphate dehydrogenase family.

Its subcellular location is the cytoplasm. It catalyses the reaction sn-glycerol 3-phosphate + NAD(+) = dihydroxyacetone phosphate + NADH + H(+). It carries out the reaction sn-glycerol 3-phosphate + NADP(+) = dihydroxyacetone phosphate + NADPH + H(+). The protein operates within membrane lipid metabolism; glycerophospholipid metabolism. Catalyzes the reduction of the glycolytic intermediate dihydroxyacetone phosphate (DHAP) to sn-glycerol 3-phosphate (G3P), the key precursor for phospholipid synthesis. This chain is Glycerol-3-phosphate dehydrogenase [NAD(P)+], found in Pediococcus pentosaceus (strain ATCC 25745 / CCUG 21536 / LMG 10740 / 183-1w).